The sequence spans 396 residues: Serine/threonine-protein kinase VRK1 (396 aa).

The Protein kinase domain occupies 37 to 317 (WKLGSPIGQG…LLDYVEKPLY (281 aa)). ATP-binding positions include 43–51 (IGQGGFGCI) and Lys71. Residue Lys71 forms a Glycyl lysine isopeptide (Lys-Gly) (interchain with G-Cter in SUMO2) linkage. The active-site Proton acceptor is Asp177. The segment at 352 to 396 (KPVAKKRKKEAEESVESSVEDMECSDKQTEEATQTRSKTRKRVQK) is disordered. Residues 364–374 (ESVESSVEDME) are compositionally biased toward acidic residues. Ser376 carries the phosphoserine modification. The tract at residues 387-393 (RSKTRKR) is required for interaction with the nucleosome.

This sequence belongs to the protein kinase superfamily. CK1 Ser/Thr protein kinase family. VRK subfamily. As to quaternary structure, interacts with HDAC1, KAT2B, SETDB1, KDM3A and KDM4A. Associates with the nucleosome through interactions with nucleosome DNA, histone H2A and histone H2B; the interaction with H2A and H2B is mediated by the nucleosome acidic patch, a cluster of negatively charged residues of H2A and H2B forming a cleft within the nucleosome core. Post-translationally, autophosphorylated at various serine and threonine residues. Autophosphorylation does not impair its ability to phosphorylate p53/TP53. Phosphorylation by PLK3 leads to induction of Golgi fragmentation during mitosis.

It is found in the nucleus. Its subcellular location is the cytoplasm. The protein resides in the cajal body. The catalysed reaction is L-seryl-[protein] + ATP = O-phospho-L-seryl-[protein] + ADP + H(+). It catalyses the reaction L-threonyl-[protein] + ATP = O-phospho-L-threonyl-[protein] + ADP + H(+). Its activity is regulated as follows. Active in presence of Mn(2+), Mg(2+) and Zn(2+), but is not functional with Ca(2+) or Cu(2+). Has a higher affinity for Mn(2+) than for Mg(2+). RAN inhibits its autophosphorylation and its ability to phosphorylate histone H3. Its function is as follows. Serine/threonine kinase involved in the regulation of key cellular processes including the cell cycle, nuclear condensation, transcription regulation, and DNA damage response. Controls chromatin organization and remodeling by mediating phosphorylation of histone H3 on 'Thr-4' and histone H2AX (H2aXT4ph). It also phosphorylates KAT5 in response to DNA damage, promoting KAT5 association with chromatin and histone acetyltransferase activity. Is involved in the regulation of cell cycle progression of neural progenitors, and is required for proper cortical neuronal migration. Is involved in neurite elongation and branching in motor neurons, and has an essential role in Cajal bodies assembly, acting through COIL phosphorylation and the control of coilin degradation. Involved in Golgi disassembly during the cell cycle: following phosphorylation by PLK3 during mitosis, it is required to induce Golgi fragmentation. Phosphorylates BANF1: disrupts its ability to bind DNA, reduces its binding to LEM domain-containing proteins and causes its relocalization from the nucleus to the cytoplasm. Phosphorylates TP53BP1 and p53/TP53 on 'Thr-18', preventing the interaction between p53/TP53 and MDM2. Phosphorylates ATF2 which activates its transcriptional activity. Phosphorylates JUN. This is Serine/threonine-protein kinase VRK1 (VRK1) from Bos taurus (Bovine).